A 218-amino-acid chain; its full sequence is Uracil-DNA glycosylase (218 aa).

D59 acts as the Proton acceptor in catalysis.

Belongs to the uracil-DNA glycosylase (UDG) superfamily. UNG family.

The protein resides in the cytoplasm. It carries out the reaction Hydrolyzes single-stranded DNA or mismatched double-stranded DNA and polynucleotides, releasing free uracil.. Functionally, excises uracil residues from the DNA which can arise as a result of misincorporation of dUMP residues by DNA polymerase or due to deamination of cytosine. In Staphylococcus aureus (strain MSSA476), this protein is Uracil-DNA glycosylase.